An 832-amino-acid polypeptide reads, in one-letter code: Translation initiation factor IF-2 (832 aa).

The interval 1 to 249 is disordered; it reads MSDDNDKPRT…GGGSSAPREK (249 aa). Over residues 53–71 the composition is skewed to pro residues; the sequence is TPAPAPEPAPEPAPAPAPA. Over residues 89–144 the composition is skewed to basic and acidic residues; that stretch reads PQERVARLQREAEEERLKLAEDARKRDDQKAKQNADDEKKRQEENKKAEEEAEKQA. Positions 145 to 156 are enriched in low complexity; the sequence is AAEAEAAAAAEA. The span at 180–200 shows a compositional bias: basic and acidic residues; the sequence is PEPKRPEKKKEEKKPARGGAK. Positions 333 to 503 constitute a tr-type G domain; sequence PRPPVVTIMG…ELQAELLELK (171 aa). The segment at 342–349 is G1; it reads GHVDHGKT. 342–349 serves as a coordination point for GTP; sequence GHVDHGKT. The interval 367–371 is G2; the sequence is GITQH. Residues 389-392 form a G3 region; the sequence is DTPG. GTP is bound by residues 389-393 and 443-446; these read DTPGH and NKCD. A G4 region spans residues 443-446; it reads NKCD. The segment at 479-481 is G5; that stretch reads SAT.

It belongs to the TRAFAC class translation factor GTPase superfamily. Classic translation factor GTPase family. IF-2 subfamily.

Its subcellular location is the cytoplasm. In terms of biological role, one of the essential components for the initiation of protein synthesis. Protects formylmethionyl-tRNA from spontaneous hydrolysis and promotes its binding to the 30S ribosomal subunits. Also involved in the hydrolysis of GTP during the formation of the 70S ribosomal complex. This chain is Translation initiation factor IF-2, found in Erythrobacter litoralis (strain HTCC2594).